A 429-amino-acid chain; its full sequence is Enolase (429 aa).

Gln164 contributes to the (2R)-2-phosphoglycerate binding site. Glu206 acts as the Proton donor in catalysis. Mg(2+)-binding residues include Asp243, Glu286, and Asp313. Positions 338, 367, 368, and 389 each coordinate (2R)-2-phosphoglycerate. Lys338 acts as the Proton acceptor in catalysis.

Belongs to the enolase family. Mg(2+) serves as cofactor.

Its subcellular location is the cytoplasm. It localises to the secreted. The protein localises to the cell surface. It catalyses the reaction (2R)-2-phosphoglycerate = phosphoenolpyruvate + H2O. It functions in the pathway carbohydrate degradation; glycolysis; pyruvate from D-glyceraldehyde 3-phosphate: step 4/5. Its function is as follows. Catalyzes the reversible conversion of 2-phosphoglycerate (2-PG) into phosphoenolpyruvate (PEP). It is essential for the degradation of carbohydrates via glycolysis. The sequence is that of Enolase from Thermosipho melanesiensis (strain DSM 12029 / CIP 104789 / BI429).